The following is a 193-amino-acid chain: Holliday junction branch migration complex subunit RuvA (193 aa).

A domain I region spans residues 1-64 (MIGRIAGVLL…EDAHLLYGFG (64 aa)). The domain II stretch occupies residues 65-139 (TAEERSTFRE…GKIGADLGAM (75 aa)). Positions 139-143 (MAGAA) are flexible linker. The interval 144–193 (SASDHASDILNALLALGYSEKEALAAVKNVPAGTGVSEGIKLALKALSKG) is domain III.

The protein belongs to the RuvA family. As to quaternary structure, homotetramer. Forms an RuvA(8)-RuvB(12)-Holliday junction (HJ) complex. HJ DNA is sandwiched between 2 RuvA tetramers; dsDNA enters through RuvA and exits via RuvB. An RuvB hexamer assembles on each DNA strand where it exits the tetramer. Each RuvB hexamer is contacted by two RuvA subunits (via domain III) on 2 adjacent RuvB subunits; this complex drives branch migration. In the full resolvosome a probable DNA-RuvA(4)-RuvB(12)-RuvC(2) complex forms which resolves the HJ.

The protein resides in the cytoplasm. The RuvA-RuvB-RuvC complex processes Holliday junction (HJ) DNA during genetic recombination and DNA repair, while the RuvA-RuvB complex plays an important role in the rescue of blocked DNA replication forks via replication fork reversal (RFR). RuvA specifically binds to HJ cruciform DNA, conferring on it an open structure. The RuvB hexamer acts as an ATP-dependent pump, pulling dsDNA into and through the RuvAB complex. HJ branch migration allows RuvC to scan DNA until it finds its consensus sequence, where it cleaves and resolves the cruciform DNA. In Paraburkholderia xenovorans (strain LB400), this protein is Holliday junction branch migration complex subunit RuvA.